Consider the following 247-residue polypeptide: ATP synthase subunit a, chloroplastic (247 aa).

Helical transmembrane passes span 38–58 (QVLI…AIAV), 95–115 (VPFI…GALL), 134–154 (INTT…AGLT), 199–219 (LVVV…VMFL), and 220–240 (GLFT…AYIG).

Belongs to the ATPase A chain family. In terms of assembly, F-type ATPases have 2 components, CF(1) - the catalytic core - and CF(0) - the membrane proton channel. CF(1) has five subunits: alpha(3), beta(3), gamma(1), delta(1), epsilon(1). CF(0) has four main subunits: a, b, b' and c.

It is found in the plastid. It localises to the chloroplast thylakoid membrane. In terms of biological role, key component of the proton channel; it plays a direct role in the translocation of protons across the membrane. This is ATP synthase subunit a, chloroplastic from Ceratophyllum demersum (Rigid hornwort).